Reading from the N-terminus, the 379-residue chain is Alcohol dehydrogenase 1 (379 aa).

8 residues coordinate Zn(2+): C47, T49, H69, C99, C102, C105, C113, and C177. An alcohol contacts are provided by T49 and H69. T49 provides a ligand contact to NAD(+). Residues 202-207, D226, R231, T272, V295, 295-297, F322, and R372 each bind NAD(+); these read GLGAVG and VGV.

The protein belongs to the zinc-containing alcohol dehydrogenase family. As to quaternary structure, homodimer. The cofactor is Zn(2+).

It is found in the cytoplasm. The enzyme catalyses a primary alcohol + NAD(+) = an aldehyde + NADH + H(+). The catalysed reaction is a secondary alcohol + NAD(+) = a ketone + NADH + H(+). The protein is Alcohol dehydrogenase 1 (ADH1) of Cenchrus americanus (Pearl millet).